A 239-amino-acid chain; its full sequence is Uridylate kinase (239 aa).

13–16 is a binding site for ATP; sequence KLSG. Glycine 55 is a binding site for UMP. Glycine 56 and arginine 60 together coordinate ATP. Residues aspartate 75 and 136–143 each bind UMP; that span reads TGNPFFTT. Threonine 163, asparagine 164, tyrosine 169, and aspartate 172 together coordinate ATP.

The protein belongs to the UMP kinase family. As to quaternary structure, homohexamer.

The protein localises to the cytoplasm. The enzyme catalyses UMP + ATP = UDP + ADP. It participates in pyrimidine metabolism; CTP biosynthesis via de novo pathway; UDP from UMP (UMPK route): step 1/1. Inhibited by UTP. In terms of biological role, catalyzes the reversible phosphorylation of UMP to UDP. The sequence is that of Uridylate kinase from Neisseria meningitidis serogroup C / serotype 2a (strain ATCC 700532 / DSM 15464 / FAM18).